A 193-amino-acid chain; its full sequence is MTDYLLLLVGTVLVNNFVLVQFLGLCPFMGVSSRTETAIGMSFATVFVMTLASLLSYLVTTYLLVPLNLEYLTTMSFILVIAVVVQFTEMVVHKTSASLYRLLGIFLPLITTNCAVLGVALLNLRLQHGFFESIIYGFGAALGFSLVLIMFSAMREKLANADVPAPFKGTAIAMITAGLMSLAFLGFTGLVKI.

6 helical membrane passes run 5-25 (LLLL…FLGL), 39-59 (IGMS…SYLV), 72-92 (LTTM…EMVV), 102-122 (LLGI…VALL), 134-154 (IIYG…FSAM), and 171-191 (AIAM…TGLV).

Belongs to the NqrDE/RnfAE family. In terms of assembly, the complex is composed of six subunits: RnfA, RnfB, RnfC, RnfD, RnfE and RnfG.

Its subcellular location is the cell inner membrane. Part of a membrane-bound complex that couples electron transfer with translocation of ions across the membrane. This Colwellia psychrerythraea (strain 34H / ATCC BAA-681) (Vibrio psychroerythus) protein is Ion-translocating oxidoreductase complex subunit A.